We begin with the raw amino-acid sequence, 436 residues long: POU domain, class 2, transcription factor 3 (436 aa).

Disordered regions lie at residues 1–40 (MVNLESMHTDIKMSGDVADSTDARSTLSQVEPGNDRNGLD), 140–186 (QTGP…DEPS), and 256–278 (AESSPSDPSVSTPSSYPSLSEVF). Residues 183 to 257 (DEPSDLEELE…LLEKWLNDAE (75 aa)) form the POU-specific domain. Residues 258-275 (SSPSDPSVSTPSSYPSLS) are compositionally biased toward low complexity. Positions 281 to 340 (KRKKRTSIETNIRLTLEKRFQDNPKPSSEEISMIAEQLSMEKEVVRVWFCNRRQKEKRIN) form a DNA-binding region, homeobox. The segment at 363–421 (LGPLSVPPVHSTMPGTVTSSCSPGNNSRPSSPGSGLHASSPTASQNNSKAAVNSASSFN) is disordered. Low complexity-rich tracts occupy residues 381–397 (SSCSPGNNSRPSSPGSG) and 405–421 (ASQNNSKAAVNSASSFN).

Belongs to the POU transcription factor family. Class-2 subfamily. In terms of assembly, interacts (via the POU domain) with POU2AF1 and POU2AF2 in a DNA-dependent manner; this interaction recruits POU2AF2 to chromatin and increases POU2F3 transactivation activity. Specifically expressed in epidermis and cultured keratinocytes.

It is found in the nucleus. Functionally, transcription factor that binds to the octamer motif (5'-ATTTGCAT-3') and regulates cell type-specific differentiation pathways. Involved in the regulation of keratinocytes differentiation. The POU2F3-POU2AF2/POU2AF3 complex drives the expression of tuft-cell-specific genes, a rare chemosensory cells that coordinate immune and neural functions within mucosal epithelial tissues. The polypeptide is POU domain, class 2, transcription factor 3 (Homo sapiens (Human)).